The following is a 1393-amino-acid chain: MLVQFQQLLLLLISIIKLCQADDNDNSFFQPVSQPSLNYKDTGNRIGLLGSFDALSFYSFVNSSQIVNDPDTSVSIFQKKRDVSNSSSSSTSFSNSLYLQDITNNYSLKFADINGQVNQLFKISNDSVVLNGNFTSFNNQSVISPIIFTISSREVTKIFSDDINGSVKTIFLDNDLIYLGGNFKFNNTYSAAVYNITAKKVHSTPFQGFGPNSSINSIAKVLNGDKEKEDNEEELGSILFGGQFDTLGLSDLLVHNITSNNTKKHNTSNTSIISAEQLISLRHGTFTSVNGESSEEDAAAIVCPSDNKEWAAQKNSGAEWKVELPDEMKGIHPTKARIYIPEGPNGIKLFRIYSYPNNGIMNLTYIDPATNELAYCDAWCPLLNYDDLNDHVDNNILNATELNENNSVFVDEQDGSYFQYYDPSTKTKNLGYASNFQEFAFVDNVGVDTVGVTIIDWYGDQGILAGFELYQNAITVYGNDSLNDPNCQSDASDDTNNNAVINSGSFKSVQSINPAITNTDYLVTSDTNAKITLYPNISYSGNYSIIMMTPGCAYDGSCARRAIVNVTVVGDDNDVLSTKTIYQNNENNKFDYLFYGHLNGSKTSTSSNRIEISYMGTVTEGVQDPYMVVDKVIANIVSLDNYYDKNSTNHTRNNTGYELAPIKLNGLFEYSLANFSQFDEQLVHYKRNNKTYISLNNTFVGNSSINLLSGELSNQSRIDQISLGPKQQDGNKQSLLLLGKFESDSKNITLSNNNLITLTIDSYNNTLNETNIELPSRLTKRDTQTILGGNFNNSITRLIELPGCFLAIGDFALSGKDGSSSIKDLSNNNQSVSSANNFALYSDDQWYSFGNDYTSNDFNQFTNLTLDSVEYYVFSGNGQFRTWDNDNFKWVTDPTKQLNLTQAAQINDHQQILGGTGFSTMQFQSVDQAYIADGNFSKFGIDVIANKSFMISNSYYVNSSLSVIGGKFETKDVKNVGLISNSDPNNTISALQGSIVWGDNTLIQSLYVDSSDEYLFMGVNGSVQINEQTNVTGIVIYDLVNNTFTSFQPAELSHSNGDPISVNSMVLFDKGNKLLVGGDFDLAGSLSCPSLCVYDITNTRWINPQNDATTTQSIGGVVTDMKFFQSNQVLITGNGLQLNGNSGIKFLIYNFNSNSFSVKDSLNKIDQTVEKFILNDENNKNLDGRMIAFGEKSISGFDGSNWQRIDSDIIYENFTKFNDMKLLTLDKPSDYNQTYFDKSQIFTIAGVFRLKDYGLVNMALFNGTSWIPYVFTSLQQQKSTGSGSGSGSGSRSSSLQIGQIQSILIDDSYRFQSSDDLKKTNKNLSRGKVVGISLACALGSTTLLGLLYIIPYFALFKNRKDGYFQPERIHEDEMMDAVNPEDLLHEIDLQREK.

The signal sequence occupies residues 1 to 21 (MLVQFQQLLLLLISIIKLCQA). At 22–1329 (DDNDNSFFQP…TNKNLSRGKV (1308 aa)) the chain is on the extracellular side. N-linked (GlcNAc...) asparagine glycosylation is found at N62, N85, N105, N125, N133, N139, N164, N186, N195, N212, N256, N260, N266, N269, N362, N398, N405, N479, N536, N542, N565, N599, N646, N649, N653, N674, N689, N696, N702, N714, N747, N764, N768, N792, N829, N863, N899, N935, N946, N958, N985, N1020, N1030, N1041, N1213, N1232, N1262, and N1323. Residues 1330 to 1350 (VGISLACALGSTTLLGLLYII) traverse the membrane as a helical segment. The Cytoplasmic portion of the chain corresponds to 1351-1393 (PYFALFKNRKDGYFQPERIHEDEMMDAVNPEDLLHEIDLQREK).

The protein belongs to the RAX2 family.

It localises to the cell membrane. It is found in the cell tip. Its function is as follows. Required for establishing sites of emergence of yeast and hyphal daughters and for maintaining the linearity of hyphal growth, but not involved in responses that require a reorientation of the direction of already established hyphal growth (tropisms). Does not play a role in penetration or injury of human epithelial cells. This Candida albicans (strain SC5314 / ATCC MYA-2876) (Yeast) protein is Polarized growth protein RAX2.